Reading from the N-terminus, the 450-residue chain is Tol-Pal system protein TolB (450 aa).

Positions 1–37 (MIERNGLQRMPFRLNRRHMISGMASAAVLLGSRQALG) are cleaved as a signal peptide.

It belongs to the TolB family. In terms of assembly, the Tol-Pal system is composed of five core proteins: the inner membrane proteins TolA, TolQ and TolR, the periplasmic protein TolB and the outer membrane protein Pal. They form a network linking the inner and outer membranes and the peptidoglycan layer.

The protein localises to the periplasm. In terms of biological role, part of the Tol-Pal system, which plays a role in outer membrane invagination during cell division and is important for maintaining outer membrane integrity. In Nitrobacter winogradskyi (strain ATCC 25391 / DSM 10237 / CIP 104748 / NCIMB 11846 / Nb-255), this protein is Tol-Pal system protein TolB.